The primary structure comprises 27 residues: U18-ctenitoxin-Co1a (27 aa).

The protein belongs to the u18-CNTX family. As to expression, expressed by the venom gland.

The protein localises to the secreted. Functionally, not toxic to mice by intracerebroventricular injection. The protein is U18-ctenitoxin-Co1a of Ctenus ornatus (Brazilian spider).